A 1357-amino-acid polypeptide reads, in one-letter code: MAYSYTEKKRIRKDFSKLPDVMDVPYLLAIQLDSYREFLQAGASKDQFRDVGLHAAFKSVFPIISYSGNAALEYVGYRLGEPAFDVKECVLRGVTFAVPLRVKVRLIIFDKESSNKAIKDIKEQEVYMGEIPLMTENGTFVINGTERVIVSQLHRSPGVFFDHDRGKTHSSGKLLYSARIIPYRGSWLDFEFDPKDCVFVRIDRRRKLPASVLLRALGYSTEEVLNTFYTTNVFHLSGEKLSLELVPQRLRGEVAVMDIHDGSGKVIVEQGRRITARHINQLEKAGVKELDVPLEYVLGRTTAKAIVHPATGEILAECNTELTTDLLVKIAKAQVVRIETLYTNDIDCGPFISDTLKIDTTSNQLEALVEIYRMMRPGEPPTKDAAETLFNNLFFSAERYDLSAVGRMKFNRRIGRTEIEGSGVLSKEDIVEVLKTLVDIRNGKGIVDDIDHLGNRRVRCVGEMAENQFRVGLVRVERAVKERLSMAESEGLMPQDLINAKPVAAAVKEFFGSSQLSQFMGQNNPLSEITHKRRVSALGPGGLTRERAGFEVRDVHPTHYGRVCPIETPEGPNIGLINSLAAYARTNQYGFLESPYRVVKEGVVSDDIVFLSAIEEADHVIAQASAAMNEKKQLIDELVAVRHLNEFTVKAPEDVTLMDVSPKQVVSVAASLIPFLEHDDANRALMGSNMQRQAVPTLRADKPLVGTGMERNVARDSGVCVVARRGGVIDSVDASRIVVRVADDEVETGEAGVDIYNLTKYTRSNQNTCINQRPLVSKGDVVARGDIMADGPSTDMGELALGQNMRIAFMAWNGFNFEDSICLSERVVQEDRFTTIHIQELTCVARDTKLGPEEITADIPNVGEAALNKLDEAGIVYVGAEVGAGDILVGKVTPKGETQLTPEEKLLRAIFGEKASDVKDTSLRVPTGTKGTVIDVQVFTRDGVERDSRALAIEKMQLDEIRKDLNEEFRIVEGATFERLRAALNGQVVDGGAGLKKGTVITDDVLNGLEHGQWFKLRMAEDALNEQLEKAQQYIVDRRRLLDDKFEDKKRKLQQGDDLAPGVLKIVKVYLAIRRRIQPGDKMAGRHGNKGVVSVIMPVEDMPHDANGTPVDVVLNPLGVPSRMNVGQILETHLGLAAKGLGEKIDRMIEEQRKAAELRTFLTEIYNEIGGRQENLEEFTDEEIMALANNLKKGVPMATPVFDGAKEREIKAMLKLADLPESGQMQLFDGRTGNKFERSVTVGYMYMLKLNHLVDDKMHARSTGSYSLVTQQPLGGKAQFGGQRFGEMEVWALEAYGAAYTLQEMLTVKSDDVNGRTKMYKNIVDGDHRMEPGMPESFNVLIKEIRSLGIDIDLETE.

The protein belongs to the RNA polymerase beta chain family. As to quaternary structure, the RNAP catalytic core consists of 2 alpha, 1 beta, 1 beta' and 1 omega subunit. When a sigma factor is associated with the core the holoenzyme is formed, which can initiate transcription.

It catalyses the reaction RNA(n) + a ribonucleoside 5'-triphosphate = RNA(n+1) + diphosphate. In terms of biological role, DNA-dependent RNA polymerase catalyzes the transcription of DNA into RNA using the four ribonucleoside triphosphates as substrates. In Pseudomonas entomophila (strain L48), this protein is DNA-directed RNA polymerase subunit beta.